We begin with the raw amino-acid sequence, 272 residues long: Ribosomal RNA small subunit methyltransferase A (272 aa).

S-adenosyl-L-methionine-binding residues include His13, Leu15, Gly40, Glu61, Asp85, and Asn105.

Belongs to the class I-like SAM-binding methyltransferase superfamily. rRNA adenine N(6)-methyltransferase family. RsmA subfamily.

It is found in the cytoplasm. The enzyme catalyses adenosine(1518)/adenosine(1519) in 16S rRNA + 4 S-adenosyl-L-methionine = N(6)-dimethyladenosine(1518)/N(6)-dimethyladenosine(1519) in 16S rRNA + 4 S-adenosyl-L-homocysteine + 4 H(+). In terms of biological role, specifically dimethylates two adjacent adenosines (A1518 and A1519) in the loop of a conserved hairpin near the 3'-end of 16S rRNA in the 30S particle. May play a critical role in biogenesis of 30S subunits. The polypeptide is Ribosomal RNA small subunit methyltransferase A (Bacteroides fragilis (strain ATCC 25285 / DSM 2151 / CCUG 4856 / JCM 11019 / LMG 10263 / NCTC 9343 / Onslow / VPI 2553 / EN-2)).